Consider the following 101-residue polypeptide: Aspartyl/glutamyl-tRNA(Asn/Gln) amidotransferase subunit C (101 aa).

The protein belongs to the GatC family. As to quaternary structure, heterotrimer of A, B and C subunits.

The enzyme catalyses L-glutamyl-tRNA(Gln) + L-glutamine + ATP + H2O = L-glutaminyl-tRNA(Gln) + L-glutamate + ADP + phosphate + H(+). The catalysed reaction is L-aspartyl-tRNA(Asn) + L-glutamine + ATP + H2O = L-asparaginyl-tRNA(Asn) + L-glutamate + ADP + phosphate + 2 H(+). In terms of biological role, allows the formation of correctly charged Asn-tRNA(Asn) or Gln-tRNA(Gln) through the transamidation of misacylated Asp-tRNA(Asn) or Glu-tRNA(Gln) in organisms which lack either or both of asparaginyl-tRNA or glutaminyl-tRNA synthetases. The reaction takes place in the presence of glutamine and ATP through an activated phospho-Asp-tRNA(Asn) or phospho-Glu-tRNA(Gln). The polypeptide is Aspartyl/glutamyl-tRNA(Asn/Gln) amidotransferase subunit C (Salinispora tropica (strain ATCC BAA-916 / DSM 44818 / JCM 13857 / NBRC 105044 / CNB-440)).